Reading from the N-terminus, the 348-residue chain is NADH-ubiquinone oxidoreductase chain 2 (348 aa).

The next 10 helical transmembrane spans lie at 1-21, 25-45, 60-80, 93-115, 149-169, 177-197, 200-220, 239-259, 274-294, and 326-346; these read MSPY…TITF, SWLM…PLMV, FLTQ…NAWM, LSAP…HFWL, LNTT…GLGG, KVLA…IQYS, LALL…LTLM, IATM…PLTG, NLPA…FFYL, and LAML…MVAI.

This sequence belongs to the complex I subunit 2 family.

The protein resides in the mitochondrion inner membrane. It carries out the reaction a ubiquinone + NADH + 5 H(+)(in) = a ubiquinol + NAD(+) + 4 H(+)(out). Core subunit of the mitochondrial membrane respiratory chain NADH dehydrogenase (Complex I) that is believed to belong to the minimal assembly required for catalysis. Complex I functions in the transfer of electrons from NADH to the respiratory chain. The immediate electron acceptor for the enzyme is believed to be ubiquinone. The protein is NADH-ubiquinone oxidoreductase chain 2 (MT-ND2) of Latimeria chalumnae (Coelacanth).